The chain runs to 52 residues: Rubredoxin (52 aa).

Met1 is subject to N-formylmethionine; partial. A Rubredoxin-like domain is found at Met1–Leu52. Fe cation contacts are provided by Cys6, Cys9, Cys39, and Cys42.

It belongs to the rubredoxin family. Fe(3+) is required as a cofactor. In terms of processing, observed in four forms, with and without iron, and with and without formylation at Met-1.

Rubredoxin is a small nonheme, iron protein lacking acid-labile sulfide. Its single Fe, chelated to 4 Cys, functions as an electron acceptor and may also stabilize the conformation of the molecule. This chain is Rubredoxin, found in Heliobacterium mobile (Heliobacillus mobilis).